Reading from the N-terminus, the 188-residue chain is GMP synthase [glutamine-hydrolyzing] subunit A (188 aa).

The Glutamine amidotransferase type-1 domain maps to 1–188 (MIIIMDNGGQ…RNFAKICGEL (188 aa)). The active-site Nucleophile is cysteine 78. Active-site residues include histidine 165 and glutamate 167.

As to quaternary structure, heterodimer composed of a glutamine amidotransferase subunit (A) and a GMP-binding subunit (B).

It carries out the reaction XMP + L-glutamine + ATP + H2O = GMP + L-glutamate + AMP + diphosphate + 2 H(+). It functions in the pathway purine metabolism; GMP biosynthesis; GMP from XMP (L-Gln route): step 1/1. In terms of biological role, catalyzes the synthesis of GMP from XMP. This is GMP synthase [glutamine-hydrolyzing] subunit A from Pyrococcus furiosus (strain ATCC 43587 / DSM 3638 / JCM 8422 / Vc1).